The chain runs to 176 residues: Thiol:disulfide interchange protein HelX (176 aa).

The first 19 residues, 1–19 (MAKPLMFLPLLVMAGFVGA), serve as a signal peptide directing secretion. The 138-residue stretch at 35-172 (ALAGKEAPAV…ITKKIDPLLA (138 aa)) folds into the Thioredoxin domain. A disulfide bridge links cysteine 75 with cysteine 78.

Belongs to the thioredoxin family. DsbE subfamily.

The protein localises to the periplasm. In terms of biological role, required for disulfide bond formation in some periplasmic proteins. Also acts as a disulfide oxidoreductase in cytochromes c biogenesis. The cysteines of apocytochromes c must be in the reduced state for covalent linkage between the two moieties to occur. This chain is Thiol:disulfide interchange protein HelX (helX), found in Rhodobacter capsulatus (strain ATCC BAA-309 / NBRC 16581 / SB1003).